Consider the following 361-residue polypeptide: tRNA-specific 2-thiouridylase MnmA (361 aa).

ATP-binding positions include glycine 8 to serine 15 and methionine 34. Positions asparagine 94–aspartate 96 are interaction with target base in tRNA. Catalysis depends on cysteine 99, which acts as the Nucleophile. A disulfide bridge links cysteine 99 with cysteine 195. ATP is bound at residue glycine 123. The interval lysine 145–glutamine 147 is interaction with tRNA. Cysteine 195 acts as the Cysteine persulfide intermediate in catalysis. The interval arginine 307 to tyrosine 308 is interaction with tRNA.

It belongs to the MnmA/TRMU family.

Its subcellular location is the cytoplasm. The enzyme catalyses S-sulfanyl-L-cysteinyl-[protein] + uridine(34) in tRNA + AH2 + ATP = 2-thiouridine(34) in tRNA + L-cysteinyl-[protein] + A + AMP + diphosphate + H(+). Its function is as follows. Catalyzes the 2-thiolation of uridine at the wobble position (U34) of tRNA, leading to the formation of s(2)U34. This chain is tRNA-specific 2-thiouridylase MnmA, found in Legionella pneumophila subsp. pneumophila (strain Philadelphia 1 / ATCC 33152 / DSM 7513).